The following is a 1071-amino-acid chain: ATP-dependent helicase/deoxyribonuclease subunit B (1071 aa).

Belongs to the helicase family. AddB/RexB type 2 subfamily. Heterodimer of AddA and RexB. Requires Mg(2+) as cofactor.

In terms of biological role, the heterodimer acts as both an ATP-dependent DNA helicase and an ATP-dependent, dual-direction single-stranded exonuclease. Recognizes the chi site generating a DNA molecule suitable for the initiation of homologous recombination. This subunit has 5' -&gt; 3' nuclease activity but not helicase activity. This Streptococcus pyogenes serotype M18 (strain MGAS8232) protein is ATP-dependent helicase/deoxyribonuclease subunit B.